A 572-amino-acid polypeptide reads, in one-letter code: NADH-ubiquinone oxidoreductase chain 5 (572 aa).

Transmembrane regions (helical) follow at residues 6–26, 44–64, 86–106, 107–127, 147–167, 179–201, 208–230, 234–254, 268–288, 291–311, 337–357, 372–394, 422–442, 454–474, 479–499, 524–544, and 552–572; these read FFFL…YLMI, VVMT…VMYI, IMIV…PNLI, SILL…IYYQ, VAIL…YIYY, IITL…SSWL, PTPV…LLIR, MLMV…TMFM, IIAL…SMGY, LAFF…MCAG, SICF…AGFY, NFFI…FRLF, IGLL…IFPV, FLTL…SDFV, LFSL…FMPF, WGEL…INYI, and FKVY…LFFL.

The protein belongs to the complex I subunit 5 family.

The protein resides in the mitochondrion inner membrane. The catalysed reaction is a ubiquinone + NADH + 5 H(+)(in) = a ubiquinol + NAD(+) + 4 H(+)(out). Functionally, core subunit of the mitochondrial membrane respiratory chain NADH dehydrogenase (Complex I) that is believed to belong to the minimal assembly required for catalysis. Complex I functions in the transfer of electrons from NADH to the respiratory chain. The immediate electron acceptor for the enzyme is believed to be ubiquinone. This Locusta migratoria (Migratory locust) protein is NADH-ubiquinone oxidoreductase chain 5 (ND5).